A 373-amino-acid chain; its full sequence is Probable jasmonic acid carboxyl methyltransferase 1 (373 aa).

Tyrosine 18 provides a ligand contact to S-adenosyl-L-homocysteine. Residue glutamine 25 coordinates jasmonate. S-adenosyl-L-homocysteine is bound by residues cysteine 59, asparagine 64, aspartate 96, leucine 97, serine 135, and phenylalanine 136. 2 residues coordinate jasmonate: histidine 156 and tryptophan 157. Mg(2+) is bound by residues asparagine 174, aspartate 260, phenylalanine 262, and asparagine 263.

It belongs to the methyltransferase superfamily. Type-7 methyltransferase family. Mg(2+) is required as a cofactor.

It localises to the cytoplasm. The protein localises to the nucleus. It catalyses the reaction jasmonate + S-adenosyl-L-methionine = methyl (-)-jasmonate + S-adenosyl-L-homocysteine. It participates in lipid metabolism; oxylipin biosynthesis. Functionally, catalyzes the methylation of jasmonate into methyljasmonate, a plant volatile that acts as an important cellular regulator mediating diverse developmental processes and defense responses. This chain is Probable jasmonic acid carboxyl methyltransferase 1, found in Theobroma cacao (Cacao).